Consider the following 356-residue polypeptide: DNA polymerase IV (356 aa).

Residues 7-188 (IIHIDMDCFY…LPLKKIPRVG (182 aa)) form the UmuC domain. Mg(2+) contacts are provided by Asp-11 and Asp-106. Glu-107 is an active-site residue.

The protein belongs to the DNA polymerase type-Y family. As to quaternary structure, monomer. Requires Mg(2+) as cofactor.

The protein localises to the cytoplasm. The enzyme catalyses DNA(n) + a 2'-deoxyribonucleoside 5'-triphosphate = DNA(n+1) + diphosphate. Poorly processive, error-prone DNA polymerase involved in untargeted mutagenesis. Copies undamaged DNA at stalled replication forks, which arise in vivo from mismatched or misaligned primer ends. These misaligned primers can be extended by PolIV. Exhibits no 3'-5' exonuclease (proofreading) activity. May be involved in translesional synthesis, in conjunction with the beta clamp from PolIII. This Actinobacillus pleuropneumoniae serotype 5b (strain L20) protein is DNA polymerase IV.